A 739-amino-acid chain; its full sequence is NAD(P)H-quinone oxidoreductase subunit 5, chloroplastic (739 aa).

A run of 16 helical transmembrane segments spans residues 9-29 (WIIP…LLLV), 39-59 (IWAF…ADLA), 89-109 (IDPL…MVLI), 125-145 (FAYM…SNLI), 147-167 (IYIF…FWFT), 185-205 (GDFG…SFEF), 224-244 (LFAA…SAQF), 258-278 (TPIS…FLVA), 280-300 (LLPL…IGII), 327-347 (LGYI…FHLI), 354-374 (ALLF…VGYS), 396-416 (TTFF…CFWS), 425-445 (WLYS…TAFY), 544-564 (LFPM…GIPF), 603-623 (IYSV…YGSV), and 719-739 (YIFL…FFSF).

This sequence belongs to the complex I subunit 5 family. In terms of assembly, NDH is composed of at least 16 different subunits, 5 of which are encoded in the nucleus.

Its subcellular location is the plastid. It is found in the chloroplast thylakoid membrane. The enzyme catalyses a plastoquinone + NADH + (n+1) H(+)(in) = a plastoquinol + NAD(+) + n H(+)(out). It catalyses the reaction a plastoquinone + NADPH + (n+1) H(+)(in) = a plastoquinol + NADP(+) + n H(+)(out). Its function is as follows. NDH shuttles electrons from NAD(P)H:plastoquinone, via FMN and iron-sulfur (Fe-S) centers, to quinones in the photosynthetic chain and possibly in a chloroplast respiratory chain. The immediate electron acceptor for the enzyme in this species is believed to be plastoquinone. Couples the redox reaction to proton translocation, and thus conserves the redox energy in a proton gradient. The polypeptide is NAD(P)H-quinone oxidoreductase subunit 5, chloroplastic (ndhF) (Acorus calamus var. americanus (American sweet flag)).